The primary structure comprises 228 residues: Carbonic anhydrase (228 aa).

Zn(2+) is bound by residues Cys-56, Asp-58, His-112, and Cys-115.

This sequence belongs to the beta-class carbonic anhydrase family. Zn(2+) serves as cofactor.

It carries out the reaction hydrogencarbonate + H(+) = CO2 + H2O. In terms of biological role, catalyzes the reversible hydration of CO(2) to H(2)CO(3). The main role may be to provide inorganic carbon for the bicarbonate-dependent carboxylation reactions catalyzed by pyruvate carboxylase, acetyl-CoA carboxylase and carbamoyl-phosphate synthetase. Involved in osmoadaptation. This chain is Carbonic anhydrase, found in Emericella nidulans (strain FGSC A4 / ATCC 38163 / CBS 112.46 / NRRL 194 / M139) (Aspergillus nidulans).